Consider the following 396-residue polypeptide: MTTPFKRIHLIVMDSVGIGEGPDAAAFNDEGSHTLKHTLEGFEQDLPNLQRLGLGNIAPLPVVEEVEQPEAFYTKLSEASVGKDTMTGHWEIMGLNIMQPFKVYPDGFPDELVKEIEDMTGRKVVANRPASGTQIIDEWGEHQMKTGDLIVYTSADPVLQIAAHEDVIPLEELYDICEKVRELTKDPKYLIGRIIARPYVGEPGNFTRTSNRHDYALKPFGRTVMNELKDNNYDVIAIGKINDIYDGEGVTEAIRTKNNMDGMDKLIDVVKHDFTGISFLNLVDFDALYGHRRDKEGYAQAIKDFDERLPELIDNLQEDDLVIITADHGNDPIAPGTDHTREYIPVLLYSPKLKDKAHELSGDTTFSSIGATIADNFDVPLPEYGRSFLSEMNVEK.

Mn(2+) is bound by residues Asp-14, Asp-286, His-291, Asp-327, His-328, and His-339.

It belongs to the phosphopentomutase family. The cofactor is Mn(2+).

The protein resides in the cytoplasm. It catalyses the reaction 2-deoxy-alpha-D-ribose 1-phosphate = 2-deoxy-D-ribose 5-phosphate. The enzyme catalyses alpha-D-ribose 1-phosphate = D-ribose 5-phosphate. It participates in carbohydrate degradation; 2-deoxy-D-ribose 1-phosphate degradation; D-glyceraldehyde 3-phosphate and acetaldehyde from 2-deoxy-alpha-D-ribose 1-phosphate: step 1/2. Its function is as follows. Isomerase that catalyzes the conversion of deoxy-ribose 1-phosphate (dRib-1-P) and ribose 1-phosphate (Rib-1-P) to deoxy-ribose 5-phosphate (dRib-5-P) and ribose 5-phosphate (Rib-5-P), respectively. The chain is Phosphopentomutase from Staphylococcus carnosus (strain TM300).